Reading from the N-terminus, the 796-residue chain is Protein translocase subunit SecA 2 (796 aa).

ATP contacts are provided by residues Q84, 102–106 (GEGKT), and D496.

The protein belongs to the SecA family. As to quaternary structure, monomer and homodimer. Part of the essential Sec protein translocation apparatus which comprises SecA, SecYEG and auxiliary proteins SecDF. Other proteins may also be involved.

The protein localises to the cell membrane. It localises to the cytoplasm. The catalysed reaction is ATP + H2O + cellular proteinSide 1 = ADP + phosphate + cellular proteinSide 2.. Its function is as follows. Part of the Sec protein translocase complex. Interacts with the SecYEG preprotein conducting channel. Has a central role in coupling the hydrolysis of ATP to the transfer of proteins into and across the cell membrane, serving as an ATP-driven molecular motor driving the stepwise translocation of polypeptide chains across the membrane. This is Protein translocase subunit SecA 2 from Staphylococcus aureus (strain Mu3 / ATCC 700698).